Reading from the N-terminus, the 340-residue chain is Pilin (340 aa).

An N-terminal signal peptide occupies residues 1-23 (MKLRHLLLTGAALTSFAATTVHG). 2 consecutive cross-links (isoaspartyl lysine isopeptide (Lys-Asn)) follow at residues 36 to 168 (KNLD…QFKN) and 179 to 303 (KKVS…TFTN). K161 is covalently cross-linked (Threonyl lysine isopeptide (Lys-Thr) (interchain with T-311)). The EVPTG sorting signal motif lies at 308–312 (EVPTG). T311 is modified (pentaglycyl murein peptidoglycan amidated threonine; alternate). T311 participates in a covalent cross-link: Threonyl lysine isopeptide (Thr-Lys) (interchain with K-161); alternate. Residues 312 to 340 (GVAMTVAPYIALGIVAVGGALYFVKKKNA) constitute a propeptide, removed by sortase C1.

This sequence belongs to the Streptococcus pilin family. As to quaternary structure, forms columns of about 3-nanometers in diameter of head-to-tail-assembled molecules. Post-translationally, proteolytically processed and assembled in pili through a transpeptidation reaction catalyzed by the sortase C1. The last pilin subunit is cross-linked to the peptidoglycan.

The protein resides in the secreted. Its subcellular location is the cell wall. The protein localises to the fimbrium. In terms of biological role, major component of the pilus. A stack of the pilin subunits, joined by intermolecular isopeptide bonds, forms the pilus. The pilus is required for bacterial adhesion to host cells, for bacterial aggregation, and for biofilm formation. This chain is Pilin, found in Streptococcus pyogenes serotype M1.